We begin with the raw amino-acid sequence, 122 residues long: Putative iron-sulfur cluster insertion protein ErpA (122 aa).

Iron-sulfur cluster is bound by residues Cys-50, Cys-114, and Cys-116.

This sequence belongs to the HesB/IscA family. Homodimer. Iron-sulfur cluster serves as cofactor.

In terms of biological role, required for insertion of 4Fe-4S clusters. This chain is Putative iron-sulfur cluster insertion protein ErpA, found in Cupriavidus necator (strain ATCC 17699 / DSM 428 / KCTC 22496 / NCIMB 10442 / H16 / Stanier 337) (Ralstonia eutropha).